A 305-amino-acid chain; its full sequence is Transcription factor MYB87 (305 aa).

HTH myb-type domains follow at residues 9–66 (KMAV…RPNL) and 67–117 (KHGG…KKKL). DNA-binding regions (H-T-H motif) lie at residues 38–62 (WISL…LNYL) and 90–113 (WSII…NTRL).

As to expression, expressed in roots, leaves, internodes, shoot tips and flowers.

Its subcellular location is the nucleus. Transcription factor that functions as a regulator of genes affecting cell wall organization and remodeling. Activates genes related to the primary cell wall and represses genes related to the secondary cell wall and expansins. Required for the regulation of longitudinal cell growth in stems, leaves, petioles, roots, flowers and siliques. This chain is Transcription factor MYB87, found in Arabidopsis thaliana (Mouse-ear cress).